Reading from the N-terminus, the 209-residue chain is Methylated-DNA--protein-cysteine methyltransferase (209 aa).

C5 provides a ligand contact to Zn(2+). Position 14 is a phosphoserine (S14). The Zn(2+) site is built by C24 and H29. Residues 35 to 57 are disordered; sequence SGKTPSSDPKEAPASPELLGGPE. H89 lines the Zn(2+) pocket. DNA-binding residues include T99, Y118, Q119, N127, and R132. Residue C149 is the Nucleophile; methyl group acceptor of the active site. S155 is a binding site for DNA. The residue at position 205 (S205) is a Phosphoserine.

It belongs to the MGMT family. Requires Zn(2+) as cofactor.

It localises to the nucleus. The catalysed reaction is a 6-O-methyl-2'-deoxyguanosine in DNA + L-cysteinyl-[protein] = S-methyl-L-cysteinyl-[protein] + a 2'-deoxyguanosine in DNA. The enzyme catalyses a 4-O-methyl-thymidine in DNA + L-cysteinyl-[protein] = a thymidine in DNA + S-methyl-L-cysteinyl-[protein]. Involved in the cellular defense against the biological effects of O6-methylguanine (O6-MeG) and O4-methylthymine (O4-MeT) in DNA. Repairs the methylated nucleobase in DNA by stoichiometrically transferring the methyl group to a cysteine residue in the enzyme. This is a suicide reaction: the enzyme is irreversibly inactivated. The polypeptide is Methylated-DNA--protein-cysteine methyltransferase (MGMT) (Cricetulus griseus (Chinese hamster)).